The primary structure comprises 957 residues: Glycine dehydrogenase (decarboxylating) (957 aa).

Position 708 is an N6-(pyridoxal phosphate)lysine (lysine 708).

It belongs to the GcvP family. The glycine cleavage system is composed of four proteins: P, T, L and H. The cofactor is pyridoxal 5'-phosphate.

It carries out the reaction N(6)-[(R)-lipoyl]-L-lysyl-[glycine-cleavage complex H protein] + glycine + H(+) = N(6)-[(R)-S(8)-aminomethyldihydrolipoyl]-L-lysyl-[glycine-cleavage complex H protein] + CO2. In terms of biological role, the glycine cleavage system catalyzes the degradation of glycine. The P protein binds the alpha-amino group of glycine through its pyridoxal phosphate cofactor; CO(2) is released and the remaining methylamine moiety is then transferred to the lipoamide cofactor of the H protein. This is Glycine dehydrogenase (decarboxylating) from Escherichia coli (strain K12 / MC4100 / BW2952).